Reading from the N-terminus, the 305-residue chain is Cbb3-type cytochrome c oxidase subunit CcoP2 (305 aa).

Helical transmembrane passes span 4–24 (FWSW…VWLL) and 57–77 (WWFM…VLYP). Cytochrome c domains are found at residues 130-209 (QALK…RSLS) and 219-300 (VDIE…YSLS). Residues Cys143, Cys146, His147, Met186, Cys232, Cys235, His236, and Met277 each coordinate heme c.

Component of the cbb3-type cytochrome c oxidase at least composed of CcoN, CcoO, CcoQ and CcoP. The cofactor is heme c.

It is found in the cell inner membrane. The protein operates within energy metabolism; oxidative phosphorylation. Functionally, C-type cytochrome. Part of the cbb3-type cytochrome c oxidase complex. CcoP subunit is required for transferring electrons from donor cytochrome c via its heme groups to CcoO subunit. From there, electrons are shuttled to the catalytic binuclear center of CcoN subunit where oxygen reduction takes place. The complex also functions as a proton pump. The chain is Cbb3-type cytochrome c oxidase subunit CcoP2 from Stutzerimonas stutzeri (Pseudomonas stutzeri).